A 272-amino-acid chain; its full sequence is Small ribosomal subunit protein uS2 (272 aa).

The interval 238–272 (ASKEEQTEEAEEETLSSKYREQDFQEAKSGARGEK) is disordered. The span at 255–272 (KYREQDFQEAKSGARGEK) shows a compositional bias: basic and acidic residues.

It belongs to the universal ribosomal protein uS2 family.

The sequence is that of Small ribosomal subunit protein uS2 from Protochlamydia amoebophila (strain UWE25).